Here is a 427-residue protein sequence, read N- to C-terminus: Trigger factor (427 aa).

One can recognise a PPIase FKBP-type domain in the interval 163–248 (GDTVVIDFEG…VHEVKAKELP (86 aa)).

Belongs to the FKBP-type PPIase family. Tig subfamily.

It localises to the cytoplasm. The enzyme catalyses [protein]-peptidylproline (omega=180) = [protein]-peptidylproline (omega=0). Functionally, involved in protein export. Acts as a chaperone by maintaining the newly synthesized protein in an open conformation. Functions as a peptidyl-prolyl cis-trans isomerase. The sequence is that of Trigger factor from Enterococcus faecalis (strain ATCC 700802 / V583).